The chain runs to 270 residues: Urease accessory protein UreD (270 aa).

Belongs to the UreD family. UreD, UreF and UreG form a complex that acts as a GTP-hydrolysis-dependent molecular chaperone, activating the urease apoprotein by helping to assemble the nickel containing metallocenter of UreC. The UreE protein probably delivers the nickel.

The protein resides in the cytoplasm. Required for maturation of urease via the functional incorporation of the urease nickel metallocenter. The protein is Urease accessory protein UreD of Actinobacillus pleuropneumoniae serotype 7 (strain AP76).